The chain runs to 488 residues: Inosine-5'-monophosphate dehydrogenase (488 aa).

CBS domains lie at 95 to 153 (VITN…SMKI) and 157 to 214 (MTKE…PNSS). NAD(+) contacts are provided by residues D251 and 301–303 (GIG). K(+) contacts are provided by G303 and G305. S306 contributes to the IMP binding site. C308 serves as a coordination point for K(+). Residue C308 is the Thioimidate intermediate of the active site. IMP-binding positions include 341 to 343 (DGG), 364 to 365 (GS), and 388 to 392 (YRGMG). Catalysis depends on R404, which acts as the Proton acceptor. E416 provides a ligand contact to IMP. Positions 470, 471, and 472 each coordinate K(+).

This sequence belongs to the IMPDH/GMPR family. As to quaternary structure, homotetramer. It depends on K(+) as a cofactor.

It carries out the reaction IMP + NAD(+) + H2O = XMP + NADH + H(+). The protein operates within purine metabolism; XMP biosynthesis via de novo pathway; XMP from IMP: step 1/1. With respect to regulation, mycophenolic acid (MPA) is a non-competitive inhibitor that prevents formation of the closed enzyme conformation by binding to the same site as the amobile flap. In contrast, mizoribine monophosphate (MZP) is a competitive inhibitor that induces the closed conformation. MPA is a potent inhibitor of mammalian IMPDHs but a poor inhibitor of the bacterial enzymes. MZP is a more potent inhibitor of bacterial IMPDH. Functionally, catalyzes the conversion of inosine 5'-phosphate (IMP) to xanthosine 5'-phosphate (XMP), the first committed and rate-limiting step in the de novo synthesis of guanine nucleotides, and therefore plays an important role in the regulation of cell growth. The polypeptide is Inosine-5'-monophosphate dehydrogenase (Bacillus subtilis (strain 168)).